Here is a 521-residue protein sequence, read N- to C-terminus: Bacillolysin (521 aa).

An N-terminal signal peptide occupies residues 1-27; sequence MGLGKKLSVAVAASFMSLSISLPGVQA. Positions 28 to 221 are cleaved as a propeptide — activation peptide; the sequence is AEGHQLKENQ…ILKQQNKVEH (194 aa). Residue Asp360 coordinates Ca(2+). Position 364 (His364) interacts with Zn(2+). Residue Glu365 is part of the active site. Zn(2+) contacts are provided by His368 and Glu388. Ca(2+)-binding residues include Asp399, Asp402, Asp404, and Glu407. His449 (proton donor) is an active-site residue.

Belongs to the peptidase M4 family. Requires Ca(2+) as cofactor. Zn(2+) serves as cofactor.

The protein resides in the secreted. It carries out the reaction Similar, but not identical, to that of thermolysin.. Its function is as follows. Extracellular zinc metalloprotease. The sequence is that of Bacillolysin (nprE) from Bacillus subtilis subsp. amylosacchariticus.